The primary structure comprises 545 residues: Chaperonin GroEL (545 aa).

ATP contacts are provided by residues 29 to 32 (TLGP), lysine 50, 86 to 90 (DGTTT), glycine 415, and aspartate 495.

It belongs to the chaperonin (HSP60) family. In terms of assembly, forms a cylinder of 14 subunits composed of two heptameric rings stacked back-to-back. Interacts with the co-chaperonin GroES.

It localises to the cytoplasm. The catalysed reaction is ATP + H2O + a folded polypeptide = ADP + phosphate + an unfolded polypeptide.. In terms of biological role, together with its co-chaperonin GroES, plays an essential role in assisting protein folding. The GroEL-GroES system forms a nano-cage that allows encapsulation of the non-native substrate proteins and provides a physical environment optimized to promote and accelerate protein folding. The protein is Chaperonin GroEL of Porphyromonas gingivalis (strain ATCC 33277 / DSM 20709 / CIP 103683 / JCM 12257 / NCTC 11834 / 2561).